Here is a 1088-residue protein sequence, read N- to C-terminus: PAN2-PAN3 deadenylation complex catalytic subunit pan2 (1088 aa).

WD repeat units follow at residues 16–56 (VSTC…YTQF), 136–175 (HKDKNVSDIFIMRRNRLLCCGSTNGEIILRDPNSFQPVNK), 178–224 (AHTG…SLVP), and 270–309 (PLTSYLTGMDIASTGDAMVFTDVEDNIHLWSPLENPSFSD). The segment at 309-443 (DLKLPIQLPN…EDTISGPDSI (135 aa)) is linker. Residues 443 to 814 (IPKFYQRPVI…IPIIVYYEKL (372 aa)) form the USP domain. An Exonuclease domain is found at 860–1033 (VGIDSEFVAL…EDALTALKLY (174 aa)). A divalent metal cation-binding residues include aspartate 863, glutamate 865, aspartate 972, and aspartate 1025.

The protein belongs to the peptidase C19 family. PAN2 subfamily. Forms a heterotrimer with an asymmetric homodimer of the regulatory subunit ppk26/pan3 to form the poly(A)-nuclease (PAN) deadenylation complex. The cofactor is a divalent metal cation.

The protein localises to the cytoplasm. It carries out the reaction Exonucleolytic cleavage of poly(A) to 5'-AMP.. Its activity is regulated as follows. Positively regulated by the regulatory subunit ppk26/pan3. Functionally, catalytic subunit of the poly(A)-nuclease (PAN) deadenylation complex, one of two cytoplasmic mRNA deadenylases involved in mRNA turnover. PAN specifically shortens poly(A) tails of RNA and the activity is stimulated by poly(A)-binding protein pab1. PAN deadenylation is followed by rapid degradation of the shortened mRNA tails by the CCR4-NOT complex. Deadenylated mRNAs are then degraded by two alternative mechanisms, namely exosome-mediated 3'-5' exonucleolytic degradation, or deadenylation-dependent mRNA decaping and subsequent 5'-3' exonucleolytic degradation by xrn1. May also be involved in post-transcriptional maturation of mRNA poly(A) tails. This is PAN2-PAN3 deadenylation complex catalytic subunit pan2 from Schizosaccharomyces pombe (strain 972 / ATCC 24843) (Fission yeast).